Consider the following 221-residue polypeptide: Glutathione S-transferase (221 aa).

Met1 carries the post-translational modification N-acetylmethionine. An N-acetylalanine; in Glutathione S-transferase, N-terminally processed modification is found at Ala2. The 80-residue stretch at 3-82 folds into the GST N-terminal domain; the sequence is GEQNIKYFNI…YIAEKYNLLG (80 aa). Glutathione contacts are provided by residues Tyr9, Lys45, 53–54, and 66–67; these read QV and QT. The region spanning 84–208 is the GST C-terminal domain; sequence DMKEHAQIIM…PGSKRKPVPD (125 aa).

This sequence belongs to the GST superfamily. Alpha family. As to quaternary structure, homodimer or heterodimer of GSTA1 and GSTA2.

Its subcellular location is the cytoplasm. The enzyme catalyses RX + glutathione = an S-substituted glutathione + a halide anion + H(+). It catalyses the reaction prostaglandin A2 + glutathione = prostaglandin A2-S-(R)-glutathione. The catalysed reaction is prostaglandin J2 + glutathione = prostaglandin J2-S-(R)-glutathione. It carries out the reaction (13S)-hydroperoxy-(9Z,11E)-octadecadienoate + 2 glutathione = (13S)-hydroxy-(9Z,11E)-octadecadienoate + glutathione disulfide + H2O. The enzyme catalyses androst-5-ene-3,17-dione = androst-4-ene-3,17-dione. In terms of biological role, glutathione S-transferase that catalyzes the nucleophilic attack of the sulfur atom of glutathione on the electrophilic groups of a wide range of exogenous and endogenous compounds. Involved in the formation of glutathione conjugates of both prostaglandin A2 (PGA2) and prostaglandin J2 (PGJ2). It also catalyzes the isomerization of D5-androstene-3,17-dione (AD) into D4-androstene-3,17-dione and may therefore play an important role in hormone biosynthesis. Through its glutathione-dependent peroxidase activity toward the fatty acid hydroperoxide (13S)-hydroperoxy-(9Z,11E)-octadecadienoate/13-HPODE it is also involved in the metabolism of oxidized linoleic acid. The sequence is that of Glutathione S-transferase from Antechinus stuartii (Brown marsupial mouse).